Consider the following 635-residue polypeptide: Sodium- and chloride-dependent creatine transporter 1 (635 aa).

Positions 1–28 are disordered; the sequence is MAKKSAENGIYSVSGDEKKGPLIAPGPD. Residues 1–60 lie on the Cytoplasmic side of the membrane; it reads MAKKSAENGIYSVSGDEKKGPLIAPGPDGAPAKGDGPVGLGTPGGRLAVPPRETWTRQMD. At T42 the chain carries Phosphothreonine. The chain crosses the membrane as a helical span at residues 61-81; it reads FIMSCVGFAVGLGNVWRFPYL. The Extracellular portion of the chain corresponds to 82 to 87; that stretch reads CYKNGG. Residues 88–108 form a helical membrane-spanning segment; it reads GVFLIPYVLIALVGGIPIFFL. The Cytoplasmic portion of the chain corresponds to 109–138; that stretch reads EISLGQFMKAGSINVWNICPLFKGLGYASM. The helical transmembrane segment at 139–159 threads the bilayer; that stretch reads VIVFYCNTYYIMVLAWGFYYL. The Extracellular portion of the chain corresponds to 160–230; sequence VKSFTTTLPW…LSGGLEVPGA (71 aa). Residues N192 and N197 are each glycosylated (N-linked (GlcNAc...) asparagine). The helical transmembrane segment at 231–251 threads the bilayer; the sequence is LNWEVTLCLLACWVLVYFCVW. Over 252-269 the chain is Cytoplasmic; that stretch reads KGVKSTGKIVYFTATFPY. A helical transmembrane segment spans residues 270–290; it reads VVLVVLLVRGVLLPGALDGII. Residues 291 to 304 lie on the Extracellular side of the membrane; that stretch reads YYLKPDWSKLGSPQ. A helical transmembrane segment spans residues 305-325; that stretch reads VWIDAGTQIFFSYAIGLGALT. At 326–341 the chain is on the cytoplasmic side; sequence ALGSYNRFNNNCYKDA. A helical membrane pass occupies residues 342–362; it reads IILALINSGTSFFAGFVVFSI. The Extracellular portion of the chain corresponds to 363 to 394; the sequence is LGFMAAEQGVHISKVAESGPGLAFIAYPRAVT. A helical membrane pass occupies residues 395–415; sequence LMPVAPLWAALFFFMLLLLGL. Topologically, residues 416 to 444 are cytoplasmic; sequence DSQFVGVEGFITGLLDLLPASYYFRFQRE. The chain crosses the membrane as a helical span at residues 445–465; the sequence is ISVALCCALCFVIDLSMVTDG. The Extracellular segment spans residues 466-479; the sequence is GMYVFQLFDYYSAS. A helical membrane pass occupies residues 480–500; that stretch reads GTTLLWQAFWECVVVAWVYGA. Over 501 to 520 the chain is Cytoplasmic; that stretch reads DRFMDDIACMIGYRPCPWMK. Residues 521-541 form a helical membrane-spanning segment; it reads WCWSFFTPLVCMGIFIFNVVY. The Extracellular portion of the chain corresponds to 542-560; sequence YEPLVYNNTYVYPWWGEAM. The N-linked (GlcNAc...) asparagine glycan is linked to N548. The chain crosses the membrane as a helical span at residues 561–581; that stretch reads GWAFALSSMLCVPLHLLGCLL. Over 582-635 the chain is Cytoplasmic; it reads RAKGTMAERWQHLTQPIWGLHHLEYRAQDADVRGLTTLTPVSESSKVVVVESVM. Phosphothreonine is present on residues T617 and T620. S623 carries the post-translational modification Phosphoserine.

Belongs to the sodium:neurotransmitter symporter (SNF) (TC 2.A.22) family. SLC6A8 subfamily. Glycosylated. In terms of tissue distribution, predominantly expressed in skeletal muscle and kidney. Also found in brain, heart, colon, testis and prostate.

The protein resides in the cell membrane. The protein localises to the apical cell membrane. The enzyme catalyses creatine(out) + chloride(out) + 2 Na(+)(out) = creatine(in) + chloride(in) + 2 Na(+)(in). Its function is as follows. Creatine:sodium symporter which mediates the uptake of creatine. Plays an important role in supplying creatine to the brain via the blood-brain barrier. The sequence is that of Sodium- and chloride-dependent creatine transporter 1 (SLC6A8) from Homo sapiens (Human).